The sequence spans 210 residues: 3-hexulose-6-phosphate synthase 3 (210 aa).

Belongs to the HPS/KGPDC family. HPS subfamily.

The catalysed reaction is D-ribulose 5-phosphate + formaldehyde = D-arabino-hex-3-ulose 6-phosphate. Its pathway is one-carbon metabolism; formaldehyde assimilation via RuMP pathway; D-fructose 6-phosphate from D-ribulose 5-phosphate and formaldehyde: step 1/2. In terms of biological role, catalyzes the condensation of ribulose 5-phosphate with formaldehyde to form 3-hexulose 6-phosphate. The protein is 3-hexulose-6-phosphate synthase 3 of Staphylococcus saprophyticus subsp. saprophyticus (strain ATCC 15305 / DSM 20229 / NCIMB 8711 / NCTC 7292 / S-41).